The primary structure comprises 212 residues: MAETKEFKTLYNLFIDSYLQKLAQHSIPTNVTCAIHIGEVIGQFKNCALRITNKCMSNSRLSFTLMVESFIEVISLLPEKDRRRIAEEIGIDLDDVPSAVSKLEKNCNAYAEVNNIIDIQKLDIGECSAPPGQHMLLQIVNTGSAERNCGLQTIVKSLNKIYVPPIIENRLPYYDPWFLVGVAIILVIFTVAICSIRRNLALKYRYGTFLYV.

Residues 1–175 (MAETKEFKTL…IIENRLPYYD (175 aa)) are Virion surface-facing. Cystine bridges form between Cys33-Cys55, Cys47-Cys127, and Cys107-Cys149. A helical membrane pass occupies residues 176–196 (PWFLVGVAIILVIFTVAICSI). The Intravirion segment spans residues 197-212 (RRNLALKYRYGTFLYV).

Belongs to the orthopoxvirus OPG053 family. In terms of assembly, component of the entry fusion complex (EFC) composed of OPG053/F9, OPG076/O3, OPG086/G3, OPG094/G9, OPG095/L1, OPG099/L5, OPG107/H2, OPG143/A16, OPG104/J5, OPG147/A21 and OPG155/A28. Except for OPG095/L1 and OPG052/F9, each of the EFC proteins is required for assembly or stability of the complex. Disulfid bonds are oxidized in the cytoplasm by OPG088 protein. In terms of processing, unglycosylated because produced in viral factories instead of the classic ER -Golgi route.

The protein resides in the virion membrane. Its function is as follows. Component of the entry fusion complex (EFC), which consists of 11 proteins. During cell infection, this complex mediates entry of the virion core into the host cytoplasm by a two-step mechanism consisting of lipid mixing of the viral and cellular membranes and subsequent pore formation. The chain is Entry-fusion complex associated protein OPG083 (OPG053) from Vaccinia virus (strain Western Reserve) (VACV).